We begin with the raw amino-acid sequence, 635 residues long: 1-deoxy-D-xylulose-5-phosphate synthase (635 aa).

Residues H79 and 120–122 (GHS) each bind thiamine diphosphate. D151 provides a ligand contact to Mg(2+). Residues 152 to 153 (GA), N182, Y291, and E372 each bind thiamine diphosphate. N182 is a Mg(2+) binding site.

The protein belongs to the transketolase family. DXPS subfamily. Homodimer. The cofactor is Mg(2+). Requires thiamine diphosphate as cofactor.

The catalysed reaction is D-glyceraldehyde 3-phosphate + pyruvate + H(+) = 1-deoxy-D-xylulose 5-phosphate + CO2. Its pathway is metabolic intermediate biosynthesis; 1-deoxy-D-xylulose 5-phosphate biosynthesis; 1-deoxy-D-xylulose 5-phosphate from D-glyceraldehyde 3-phosphate and pyruvate: step 1/1. In terms of biological role, catalyzes the acyloin condensation reaction between C atoms 2 and 3 of pyruvate and glyceraldehyde 3-phosphate to yield 1-deoxy-D-xylulose-5-phosphate (DXP). This chain is 1-deoxy-D-xylulose-5-phosphate synthase, found in Xylella fastidiosa (strain M12).